The sequence spans 363 residues: G-protein coupled receptor 6 (363 aa).

Residues 1–75 (MNASAAALNE…SGLLLSAVNP (75 aa)) are Extracellular-facing. Residues asparagine 2 and asparagine 9 are each glycosylated (N-linked (GlcNAc...) asparagine). The interval 29–48 (GAPDTGEWGPPAASAALGGG) is disordered. The N-linked (GlcNAc...) asparagine glycan is linked to asparagine 52. The chain crosses the membrane as a helical span at residues 76–95 (WDVLLCVSGTVIAGENALVV). The Cytoplasmic portion of the chain corresponds to 96-107 (ALIASTPALRTP). Residues 108–131 (MFVLVGSLATADLLAGCGLILHFV) traverse the membrane as a helical segment. Over 132-143 (FQYVVPSETVSL) the chain is Extracellular. The helical transmembrane segment at 144–165 (LMVGFLVASFAASVSSLLAITV) threads the bilayer. Residues 166–186 (DRYLSLYNALTYYSRRTLLGV) are Cytoplasmic-facing. The helical transmembrane segment at 187 to 206 (HLLLAATWTVSLGLGLLPVL) threads the bilayer. Over 207–231 (GWNCLADRTSCSVVRPLTRSHVALL) the chain is Extracellular. A helical transmembrane segment spans residues 232–250 (STSFFVVFGIMLHLYVRIC). At 251–278 (QVVWRHAHQIALQQHCLAPPHLAATRKG) the chain is on the cytoplasmic side. The helical transmembrane segment at 279–305 (VGTLAVVLGTFGASWLPFAIYCVVGSQ) threads the bilayer. The Extracellular portion of the chain corresponds to 306–310 (EDPAI). The helical transmembrane segment at 311–332 (YTYATLLPATYNSMINPIIYAF) threads the bilayer. The Cytoplasmic segment spans residues 333–363 (RNQEIQRALWLLFCGCFQSKVPFRSRSPSEV). Residue cysteine 346 is the site of S-palmitoyl cysteine attachment. 3 positions are modified to phosphoserine: serine 357, serine 359, and serine 361.

It belongs to the G-protein coupled receptor 1 family. Mainly expressed in the brain. Selectively expressed in striatopallidal neurons in the striatum.

It is found in the cell membrane. Functionally, orphan receptor with constitutive G(s) signaling activity that activate cyclic AMP. Promotes neurite outgrowth and blocks myelin inhibition in neurons. The protein is G-protein coupled receptor 6 (Gpr6) of Mus musculus (Mouse).